The chain runs to 520 residues: Peptide chain release factor 3 (520 aa).

Residues 8 to 277 (ESRKTFAIIS…FAPMPNARQT (270 aa)) enclose the tr-type G domain. Residues 17–24 (SHPDAGKT), 85–89 (DTPGH), and 139–142 (NKLD) contribute to the GTP site.

Belongs to the TRAFAC class translation factor GTPase superfamily. Classic translation factor GTPase family. PrfC subfamily.

Its subcellular location is the cytoplasm. Its function is as follows. Increases the formation of ribosomal termination complexes and stimulates activities of RF-1 and RF-2. It binds guanine nucleotides and has strong preference for UGA stop codons. It may interact directly with the ribosome. The stimulation of RF-1 and RF-2 is significantly reduced by GTP and GDP, but not by GMP. This is Peptide chain release factor 3 from Staphylococcus aureus (strain MRSA252).